The sequence spans 233 residues: Ribose-5-phosphate isomerase A (233 aa).

Substrate is bound by residues 28–31, 83–86, and 96–99; these read TGST, DGAD, and KGGG. Glu-105 acts as the Proton acceptor in catalysis. Lys-123 lines the substrate pocket.

This sequence belongs to the ribose 5-phosphate isomerase family. As to quaternary structure, homodimer.

It carries out the reaction aldehydo-D-ribose 5-phosphate = D-ribulose 5-phosphate. The protein operates within carbohydrate degradation; pentose phosphate pathway; D-ribose 5-phosphate from D-ribulose 5-phosphate (non-oxidative stage): step 1/1. Its function is as follows. Catalyzes the reversible conversion of ribose-5-phosphate to ribulose 5-phosphate. In Rhizobium rhizogenes (strain K84 / ATCC BAA-868) (Agrobacterium radiobacter), this protein is Ribose-5-phosphate isomerase A.